Reading from the N-terminus, the 563-residue chain is MTTTSRPLYISYAGPSLLEMPLLNKGSAFTPQERIEFNLIGLLPQNVETIEEQVTRVYSQYKQCASDLDKHIYLRSIQDNNETLFFRLLDSHLDEMLPIIYTPTVGQACQEFSKIYRTHRGLFISYPERDRIDDILRSATKDRIKIIVVTDSERILGLGDQGIGGMGIPIGKLSLYTACGGISPAYTLPIVLDVGTNNRELLDDPMYMGWRHERVSGKEYEDFIALFIDAVQRRWPDVLLQFEDFAQSNAMPLLEKYRDELCCFNDDIQGTASVAVGTLLAACKAKNETLGQQKVVFVGAGSAGCGIAEHIIAAMRIEGLSESEARKRIFMVDRFGLLTEGMGNLLDFQLRLAQKSADVAGWTAGTETFPQLLDVVTHAGATVLIGVSGQRGLFTEQVVRELYKHCAKPLVMPLSNPTSKVEATPEEILRWTDGNALVATGSPFAPVEINGRTVHIAQCNNSYIFPGIGLGVVACKASRITDRMLMAASNALAECSPMVTGQGDAVLPPLKEIQQVSRKIALAVAKEAQAEGLALETSEEALLAAIERNFWLPGYRAYRRRSV.

Tyr-101 (proton donor) is an active-site residue. Arg-154 lines the NAD(+) pocket. Lys-172 functions as the Proton acceptor in the catalytic mechanism. 3 residues coordinate a divalent metal cation: Glu-243, Asp-244, and Asp-267. Positions 267 and 416 each coordinate NAD(+).

The protein belongs to the malic enzymes family. In terms of assembly, homotetramer. Mg(2+) serves as cofactor. It depends on Mn(2+) as a cofactor.

It carries out the reaction (S)-malate + NAD(+) = pyruvate + CO2 + NADH. It catalyses the reaction oxaloacetate + H(+) = pyruvate + CO2. This is NAD-dependent malic enzyme from Pseudomonas syringae pv. tomato (strain ATCC BAA-871 / DC3000).